The chain runs to 558 residues: V-set and immunoglobulin domain-containing protein 10 (558 aa).

The first 20 residues, 1-20, serve as a signal peptide directing secretion; the sequence is MAGLRVLLCLGALLARQGSA. Topologically, residues 21–426 are extracellular; it reads GLQLLLNPSR…IWLSVKEPLN (406 aa). N-linked (GlcNAc...) asparagine glycosylation is found at asparagine 32, asparagine 60, asparagine 121, asparagine 150, asparagine 159, and asparagine 218. Ig-like C2-type domains follow at residues 37–140, 144–235, 248–327, and 332–420; these read PNSE…RLRV, PAYV…RKVT, PQCS…VKLS, and PSQP…IWLS. Cysteine 65 and cysteine 124 are disulfide-bonded. 2 cysteine pairs are disulfide-bonded: cysteine 174–cysteine 221 and cysteine 265–cysteine 308. A glycan (N-linked (GlcNAc...) asparagine) is linked at asparagine 344. A disulfide bridge connects residues cysteine 349 and cysteine 404. A helical membrane pass occupies residues 427-447; it reads IGGIVGTVVSLLLLGLAVVSG. Residues 448–558 lie on the Cytoplasmic side of the membrane; sequence LTLYYSPAFW…GIVQEDGKPV (111 aa). Positions 477–506 are enriched in acidic residues; sequence DSEEEEEEEEEEEEKEDVAEEVEQETNETE. 2 disordered regions span residues 477-515 and 532-558; these read DSEE…ISKH and MGNG…GKPV.

It is found in the membrane. The sequence is that of V-set and immunoglobulin domain-containing protein 10 (Vsig10) from Mus musculus (Mouse).